A 119-amino-acid polypeptide reads, in one-letter code: SGSCEVKTCWRAMPPFRKVGNVIKEKFDGATEVEMQRIGTRKQLVPKNPQFKPHTDEDLVYISPSPDFCIRDMKAGVPGTAGRHCNRTSKALGGCELLCCGRGFHTAEAELVERCSCKF.

The O-palmitoleoyl serine; by PORCN moiety is linked to residue Ser-1. Intrachain disulfides connect Cys-69/Cys-100 and Cys-85/Cys-95. Asn-86 is a glycosylation site (N-linked (GlcNAc...) asparagine).

This sequence belongs to the Wnt family. Post-translationally, palmitoleoylation is required for efficient binding to frizzled receptors. Depalmitoleoylation leads to Wnt signaling pathway inhibition.

It is found in the secreted. The protein resides in the extracellular space. It localises to the extracellular matrix. Ligand for members of the frizzled family of seven transmembrane receptors. Plays an important role in embryonic development. The protein is Protein Wnt-4 (WNT-4) of Eptatretus stoutii (Pacific hagfish).